A 175-amino-acid chain; its full sequence is Adenine phosphoribosyltransferase (175 aa).

This sequence belongs to the purine/pyrimidine phosphoribosyltransferase family. As to quaternary structure, homodimer.

Its subcellular location is the cytoplasm. The catalysed reaction is AMP + diphosphate = 5-phospho-alpha-D-ribose 1-diphosphate + adenine. The protein operates within purine metabolism; AMP biosynthesis via salvage pathway; AMP from adenine: step 1/1. Catalyzes a salvage reaction resulting in the formation of AMP, that is energically less costly than de novo synthesis. The chain is Adenine phosphoribosyltransferase from Caldicellulosiruptor bescii (strain ATCC BAA-1888 / DSM 6725 / KCTC 15123 / Z-1320) (Anaerocellum thermophilum).